A 126-amino-acid chain; its full sequence is Large ribosomal subunit protein uL22 (126 aa).

Belongs to the universal ribosomal protein uL22 family. As to quaternary structure, part of the 50S ribosomal subunit.

Functionally, this protein binds specifically to 23S rRNA; its binding is stimulated by other ribosomal proteins, e.g. L4, L17, and L20. It is important during the early stages of 50S assembly. It makes multiple contacts with different domains of the 23S rRNA in the assembled 50S subunit and ribosome. In terms of biological role, the globular domain of the protein is located near the polypeptide exit tunnel on the outside of the subunit, while an extended beta-hairpin is found that lines the wall of the exit tunnel in the center of the 70S ribosome. This is Large ribosomal subunit protein uL22 from Phenylobacterium zucineum (strain HLK1).